We begin with the raw amino-acid sequence, 702 residues long: DnaJ homolog subfamily C member 14 (702 aa).

Disordered stretches follow at residues 1 to 148 and 165 to 229; these read MAQK…GGNG and DELE…KRSQ. Residues 75-84 show a composition bias toward pro residues; sequence HGPPGGPGPP. Over residues 88–103 the composition is skewed to acidic residues; it reads EDPDQSETSSEEESGV. A compositionally biased stretch (polar residues) spans 113-133; it reads TGNQKDGNSFLSIPSACNCQG. A compositionally biased stretch (acidic residues) spans 165–175; the sequence is DELEEEYDDEE. Residues 192 to 201 show a composition bias toward basic residues; that stretch reads PPSRRQRHRF. Residues 202 to 217 show a composition bias toward basic and acidic residues; sequence PTKEDTREGGRRDPRS. Over residues 218–227 the composition is skewed to basic residues; the sequence is PGRHRLGRKR. 3 helical membrane passes run 250–270, 300–320, and 326–346; these read AGFW…ETCG, GWAQ…VGLF, and LLGA…QLGW. The J domain maps to 443-507; sequence NPFHVLGVEA…EKRKEYEMKR (65 aa). The disordered stretch occupies residues 658-702; that stretch reads MPNGNFFAAPQPAPGAAAASKPNSTVPKGEAKPKRRKKVRRPFQR. Residues 659–676 are compositionally biased toward low complexity; sequence PNGNFFAAPQPAPGAAAA. Basic residues predominate over residues 690–702; that stretch reads PKRRKKVRRPFQR.

Interacts with the FxxxFxxxF motif of DRD1 via its C-terminal domain. In terms of tissue distribution, highly expressed in pancreas and selectively expressed in brain, lung, liver, skeletal muscle and kidney.

Its subcellular location is the endoplasmic reticulum membrane. Its function is as follows. Regulates the export of target proteins, such as DRD1, from the endoplasmic reticulum to the cell surface. The protein is DnaJ homolog subfamily C member 14 (DNAJC14) of Homo sapiens (Human).